A 36-amino-acid polypeptide reads, in one-letter code: Cecropin-D (36 aa).

Lysine amide is present on Lys36.

This sequence belongs to the cecropin family.

It is found in the secreted. Cecropins have lytic and antibacterial activity against several Gram-positive and Gram-negative bacteria. This Antheraea pernyi (Chinese oak silk moth) protein is Cecropin-D.